The primary structure comprises 208 residues: Imidazoleglycerol-phosphate dehydratase (208 aa).

The protein belongs to the imidazoleglycerol-phosphate dehydratase family.

The protein resides in the cytoplasm. The catalysed reaction is D-erythro-1-(imidazol-4-yl)glycerol 3-phosphate = 3-(imidazol-4-yl)-2-oxopropyl phosphate + H2O. It participates in amino-acid biosynthesis; L-histidine biosynthesis; L-histidine from 5-phospho-alpha-D-ribose 1-diphosphate: step 6/9. This chain is Imidazoleglycerol-phosphate dehydratase, found in Symbiobacterium thermophilum (strain DSM 24528 / JCM 14929 / IAM 14863 / T).